The sequence spans 382 residues: 3-dehydroquinate synthase (382 aa).

NAD(+) contacts are provided by residues 115–119 (GVVGD), 139–140 (TS), lysine 152, and lysine 161. Zn(2+)-binding residues include glutamate 194, histidine 256, and histidine 274.

It belongs to the sugar phosphate cyclases superfamily. Dehydroquinate synthase family. It depends on Co(2+) as a cofactor. Zn(2+) serves as cofactor. Requires NAD(+) as cofactor.

It is found in the cytoplasm. The catalysed reaction is 7-phospho-2-dehydro-3-deoxy-D-arabino-heptonate = 3-dehydroquinate + phosphate. The protein operates within metabolic intermediate biosynthesis; chorismate biosynthesis; chorismate from D-erythrose 4-phosphate and phosphoenolpyruvate: step 2/7. Its function is as follows. Catalyzes the conversion of 3-deoxy-D-arabino-heptulosonate 7-phosphate (DAHP) to dehydroquinate (DHQ). The chain is 3-dehydroquinate synthase from Rhodopseudomonas palustris (strain BisB18).